Reading from the N-terminus, the 320-residue chain is Methionyl-tRNA formyltransferase (320 aa).

117 to 120 (SLLP) lines the (6S)-5,6,7,8-tetrahydrofolate pocket.

The protein belongs to the Fmt family.

The enzyme catalyses L-methionyl-tRNA(fMet) + (6R)-10-formyltetrahydrofolate = N-formyl-L-methionyl-tRNA(fMet) + (6S)-5,6,7,8-tetrahydrofolate + H(+). Its function is as follows. Attaches a formyl group to the free amino group of methionyl-tRNA(fMet). The formyl group appears to play a dual role in the initiator identity of N-formylmethionyl-tRNA by promoting its recognition by IF2 and preventing the misappropriation of this tRNA by the elongation apparatus. The sequence is that of Methionyl-tRNA formyltransferase from Bordetella petrii (strain ATCC BAA-461 / DSM 12804 / CCUG 43448).